Reading from the N-terminus, the 118-residue chain is Large ribosomal subunit protein bL19 (118 aa).

Belongs to the bacterial ribosomal protein bL19 family.

In terms of biological role, this protein is located at the 30S-50S ribosomal subunit interface and may play a role in the structure and function of the aminoacyl-tRNA binding site. The sequence is that of Large ribosomal subunit protein bL19 from Ligilactobacillus salivarius (strain UCC118) (Lactobacillus salivarius).